The following is a 424-amino-acid chain: Attachment protein G3P (424 aa).

A signal peptide spans 1 to 18 (MKKLLFAIPLVVPFYSHS). The N1 stretch occupies residues 19-85 (AETVESCLAK…VPIGLAIPEN (67 aa)). Cystine bridges form between C25–C54 and C64–C71. Positions 83–147 (PENEGGGSEG…NPNPSLEESQ (65 aa)) are disordered. The tract at residues 86–104 (EGGGSEGGGSEGGGSEGGG) is G1 (Gly-rich linker). The span at 86–105 (EGGGSEGGGSEGGGSEGGGT) shows a compositional bias: gly residues. Residues 105–141 (TKPPEYGDTPIPGYTYINPLDGTYPPGTEQNPANPNP) form a hinge region. The segment covering 132–147 (TEQNPANPNPSLEESQ) has biased composition (polar residues). The N2 stretch occupies residues 142–228 (SLEESQPLNT…CEYQGQSSDL (87 aa)). A disulfide bond links C206 and C219. The tract at residues 222 to 279 (QGQSSDLPQPPVNAGGGSGGGSGGGSEGGGSEGGGSEGGGSEGGGSGGGSGSGDFDYE) is disordered. Gly residues predominate over residues 235-273 (AGGGSGGGSGGGSEGGGSEGGGSEGGGSEGGGSGGGSGS). A G2 (Gly-rich linker) region spans residues 236 to 274 (GGGSGGGSGGGSEGGGSEGGGSEGGGSEGGGSGGGSGSG). The not essential for gene 3 function stretch occupies residues 253–262 (EGGGSEGGGS). Positions 275–424 (DFDYEKMANA…FANILRNKES (150 aa)) are CT. Residues 398–418 (VFAFLLYVATFMYVFSTFANI) form a helical membrane-spanning segment.

The protein belongs to the inovirus G3P protein family. Interacts with G6P; this interaction is required for proper integration of G3P and G6P into the virion. Interacts with G8P. Interacts with the tip of the host pilus. Interacts (via N-terminus) with host TolA. Interacts (via transmembrane domain) with host TolQ (via 2nd and 3rd transmembrane domains); this interaction allows the phage translocation across the host inner membrane. Interacts (via transmembrane domain) with host TolR (via transmembrane domain); this interaction allows the phage translocation across the host inner membrane.

The protein resides in the virion. It localises to the host membrane. Functionally, plays essential roles both in the penetration of the viral genome into the bacterial host via pilus retraction and in the extrusion process. During the initial step of infection, G3P mediates adsorption of the phage to its primary receptor, the tip of host F-pilus. Attachment of the phage causes pilus retraction bringing the viral particle into close proximity of the host cell inner membrane. Binding to the host pilus initiates a change in the G3P conformation, allowing subsequent interaction with the host entry receptors tolA, TolQ and TolR and penetration of the viral DNA into the host cytoplasm. In the extrusion process, G3P mediates the release of the membrane-anchored virion from the cell via its C-terminal domain. In Enterobacteria phage f1 (Bacteriophage f1), this protein is Attachment protein G3P (III).